We begin with the raw amino-acid sequence, 251 residues long: Hydroxyacylglutathione hydrolase (251 aa).

Residues H53, H55, D57, H58, H110, D127, and H165 each contribute to the Zn(2+) site.

Belongs to the metallo-beta-lactamase superfamily. Glyoxalase II family. Monomer. Zn(2+) serves as cofactor.

The catalysed reaction is an S-(2-hydroxyacyl)glutathione + H2O = a 2-hydroxy carboxylate + glutathione + H(+). It participates in secondary metabolite metabolism; methylglyoxal degradation; (R)-lactate from methylglyoxal: step 2/2. Functionally, thiolesterase that catalyzes the hydrolysis of S-D-lactoyl-glutathione to form glutathione and D-lactic acid. This Salmonella arizonae (strain ATCC BAA-731 / CDC346-86 / RSK2980) protein is Hydroxyacylglutathione hydrolase.